Here is a 149-residue protein sequence, read N- to C-terminus: Deoxyuridine 5'-triphosphate nucleotidohydrolase (149 aa).

Residues 68 to 70 (RSG), N81, 85 to 87 (LID), and M95 each bind substrate.

It belongs to the dUTPase family. It depends on Mg(2+) as a cofactor.

It catalyses the reaction dUTP + H2O = dUMP + diphosphate + H(+). It functions in the pathway pyrimidine metabolism; dUMP biosynthesis; dUMP from dCTP (dUTP route): step 2/2. This enzyme is involved in nucleotide metabolism: it produces dUMP, the immediate precursor of thymidine nucleotides and it decreases the intracellular concentration of dUTP so that uracil cannot be incorporated into DNA. The polypeptide is Deoxyuridine 5'-triphosphate nucleotidohydrolase (Herminiimonas arsenicoxydans).